A 336-amino-acid chain; its full sequence is Anthranilate phosphoribosyltransferase (336 aa).

Residues G82, 85–86 (GD), T90, 92–95 (NIST), 110–118 (KHGNRFASG), and S122 contribute to the 5-phospho-alpha-D-ribose 1-diphosphate site. G82 contributes to the anthranilate binding site. Mg(2+) is bound at residue S94. Position 113 (N113) interacts with anthranilate. R168 lines the anthranilate pocket. Residues D227 and E228 each contribute to the Mg(2+) site.

Belongs to the anthranilate phosphoribosyltransferase family. In terms of assembly, homodimer. The cofactor is Mg(2+).

It carries out the reaction N-(5-phospho-beta-D-ribosyl)anthranilate + diphosphate = 5-phospho-alpha-D-ribose 1-diphosphate + anthranilate. Its pathway is amino-acid biosynthesis; L-tryptophan biosynthesis; L-tryptophan from chorismate: step 2/5. Functionally, catalyzes the transfer of the phosphoribosyl group of 5-phosphorylribose-1-pyrophosphate (PRPP) to anthranilate to yield N-(5'-phosphoribosyl)-anthranilate (PRA). This Desulfitobacterium hafniense (strain Y51) protein is Anthranilate phosphoribosyltransferase.